The sequence spans 423 residues: Serine--tRNA ligase (423 aa).

230–232 provides a ligand contact to L-serine; it reads TAE. Residue 261–263 participates in ATP binding; sequence RSE. Residue E284 participates in L-serine binding. ATP is bound at residue 348 to 351; that stretch reads EISS. S383 is a binding site for L-serine.

The protein belongs to the class-II aminoacyl-tRNA synthetase family. Type-1 seryl-tRNA synthetase subfamily. In terms of assembly, homodimer. The tRNA molecule binds across the dimer.

It is found in the cytoplasm. It carries out the reaction tRNA(Ser) + L-serine + ATP = L-seryl-tRNA(Ser) + AMP + diphosphate + H(+). The catalysed reaction is tRNA(Sec) + L-serine + ATP = L-seryl-tRNA(Sec) + AMP + diphosphate + H(+). It participates in aminoacyl-tRNA biosynthesis; selenocysteinyl-tRNA(Sec) biosynthesis; L-seryl-tRNA(Sec) from L-serine and tRNA(Sec): step 1/1. Its function is as follows. Catalyzes the attachment of serine to tRNA(Ser). Is also able to aminoacylate tRNA(Sec) with serine, to form the misacylated tRNA L-seryl-tRNA(Sec), which will be further converted into selenocysteinyl-tRNA(Sec). The protein is Serine--tRNA ligase of Levilactobacillus brevis (strain ATCC 367 / BCRC 12310 / CIP 105137 / JCM 1170 / LMG 11437 / NCIMB 947 / NCTC 947) (Lactobacillus brevis).